The chain runs to 176 residues: ATP-dependent protease subunit HslV (176 aa).

Residue Thr-5 is part of the active site. Positions 161, 164, and 167 each coordinate Na(+).

This sequence belongs to the peptidase T1B family. HslV subfamily. As to quaternary structure, a double ring-shaped homohexamer of HslV is capped on each side by a ring-shaped HslU homohexamer. The assembly of the HslU/HslV complex is dependent on binding of ATP.

Its subcellular location is the cytoplasm. It carries out the reaction ATP-dependent cleavage of peptide bonds with broad specificity.. With respect to regulation, allosterically activated by HslU binding. In terms of biological role, protease subunit of a proteasome-like degradation complex believed to be a general protein degrading machinery. In Desulfitobacterium hafniense (strain DSM 10664 / DCB-2), this protein is ATP-dependent protease subunit HslV.